Consider the following 167-residue polypeptide: DNA-directed RNA polymerase 19 kDa subunit (167 aa).

Positions 15–41 (DNDYKSYDEDDDSISDIGETSDDCCTT) are disordered. The segment covering 22 to 36 (DEDDDSISDIGETSD) has biased composition (acidic residues).

It belongs to the poxviridae DNA-directed RNA polymerase 19 kDa subunit family. The DNA-dependent RNA polymerase used for intermediate and late genes expression consists of eight subunits (147) kDa, 133 kDa, 35 kDa, 30 kDa, 22 kDa, 19 kDa, 18 kDa and 7 kDa totalling more than 500 kDa in mass. The same holoenzyme, with the addition of the transcription-specificity factor RAP94, is used for early gene expression.

The protein localises to the virion. It catalyses the reaction RNA(n) + a ribonucleoside 5'-triphosphate = RNA(n+1) + diphosphate. Part of the DNA-dependent RNA polymerase which catalyzes the transcription of viral DNA into RNA using the four ribonucleoside triphosphates as substrates. Responsible for the transcription of early, intermediate and late genes. DNA-dependent RNA polymerase associates with the early transcription factor (ETF) thereby allowing the early genes transcription. Late transcription, and probably also intermediate transcription, require newly synthesized RNA polymerase. This is DNA-directed RNA polymerase 19 kDa subunit (RPO19) from Vertebrata (FPV).